The sequence spans 391 residues: UPF0229 protein BCB4264_A0587 (391 aa).

The span at 1–16 shows a compositional bias: polar residues; the sequence is MGEENQPNYTISQENW. 2 disordered regions span residues 1-31 and 80-117; these read MGEE…RHQE and HVGQ…GDAA. Residues 21 to 31 show a composition bias toward basic and acidic residues; it reads KGYDDQQRHQE. Over residues 98-115 the composition is skewed to gly residues; sequence GSGGQKQKGPGKGQGAGD.

It belongs to the UPF0229 family.

The polypeptide is UPF0229 protein BCB4264_A0587 (Bacillus cereus (strain B4264)).